The following is a 651-amino-acid chain: Acetyl-coenzyme A synthetase (651 aa).

CoA is bound by residues 190–193, Thr-309, and Asn-333; that span reads RGGR. Residues 385 to 387, 409 to 414, Asp-498, and Arg-513 each bind ATP; these read GEP and DTWWQT. Ser-521 provides a ligand contact to CoA. Arg-524 serves as a coordination point for ATP. 3 residues coordinate Mg(2+): Val-535, His-537, and Val-540. Arg-582 contacts CoA. The residue at position 607 (Lys-607) is an N6-acetyllysine.

The protein belongs to the ATP-dependent AMP-binding enzyme family. Requires Mg(2+) as cofactor. In terms of processing, acetylated. Deacetylation by the SIR2-homolog deacetylase activates the enzyme.

The enzyme catalyses acetate + ATP + CoA = acetyl-CoA + AMP + diphosphate. Catalyzes the conversion of acetate into acetyl-CoA (AcCoA), an essential intermediate at the junction of anabolic and catabolic pathways. AcsA undergoes a two-step reaction. In the first half reaction, AcsA combines acetate with ATP to form acetyl-adenylate (AcAMP) intermediate. In the second half reaction, it can then transfer the acetyl group from AcAMP to the sulfhydryl group of CoA, forming the product AcCoA. The protein is Acetyl-coenzyme A synthetase of Xanthobacter autotrophicus (strain ATCC BAA-1158 / Py2).